Here is a 333-residue protein sequence, read N- to C-terminus: uncharacterized protein (333 aa).

The interval P234–D333 is disordered. A compositionally biased stretch (pro residues) spans V251–E265. Over residues G324–D333 the composition is skewed to polar residues.

The protein resides in the cell projection. Its subcellular location is the cilium. It localises to the flagellum. This is an uncharacterized protein from Homo sapiens (Human).